Reading from the N-terminus, the 134-residue chain is Small ribosomal subunit protein uS11 (134 aa).

The protein belongs to the universal ribosomal protein uS11 family. Part of the 30S ribosomal subunit. Interacts with proteins S7 and S18. Binds to IF-3.

In terms of biological role, located on the platform of the 30S subunit, it bridges several disparate RNA helices of the 16S rRNA. Forms part of the Shine-Dalgarno cleft in the 70S ribosome. The protein is Small ribosomal subunit protein uS11 of Janthinobacterium sp. (strain Marseille) (Minibacterium massiliensis).